A 348-amino-acid polypeptide reads, in one-letter code: Probable mitochondrial adenine nucleotide transporter BTL1 (348 aa).

Solcar repeat units follow at residues 46-129, 157-241, and 251-338; these read SREA…VKRA, SWIS…MKTS, and LSRP…WKDI. Helical transmembrane passes span 52–72, 104–124, 156–176, 213–233, 256–276, and 321–341; these read FLSG…LETI, GNEI…GTFE, ISWI…STLV, FYAG…CYYF, MLVL…PLEV, and VMPS…ILLA.

The protein belongs to the mitochondrial carrier (TC 2.A.29) family.

It localises to the mitochondrion inner membrane. Probable mitochondrial adenylate carrier that catalyzes the transport of ATP, ADP and AMP. The polypeptide is Probable mitochondrial adenine nucleotide transporter BTL1 (Arabidopsis thaliana (Mouse-ear cress)).